Reading from the N-terminus, the 317-residue chain is Acetyl-coenzyme A carboxylase carboxyl transferase subunit alpha (317 aa).

In terms of domain architecture, CoA carboxyltransferase C-terminal spans 37–292; the sequence is QISQKLEDTK…EEYILKAFNE (256 aa).

The protein belongs to the AccA family. Acetyl-CoA carboxylase is a heterohexamer composed of biotin carboxyl carrier protein (AccB), biotin carboxylase (AccC) and two subunits each of ACCase subunit alpha (AccA) and ACCase subunit beta (AccD).

Its subcellular location is the cytoplasm. It carries out the reaction N(6)-carboxybiotinyl-L-lysyl-[protein] + acetyl-CoA = N(6)-biotinyl-L-lysyl-[protein] + malonyl-CoA. It functions in the pathway lipid metabolism; malonyl-CoA biosynthesis; malonyl-CoA from acetyl-CoA: step 1/1. Functionally, component of the acetyl coenzyme A carboxylase (ACC) complex. First, biotin carboxylase catalyzes the carboxylation of biotin on its carrier protein (BCCP) and then the CO(2) group is transferred by the carboxyltransferase to acetyl-CoA to form malonyl-CoA. The protein is Acetyl-coenzyme A carboxylase carboxyl transferase subunit alpha of Flavobacterium psychrophilum (strain ATCC 49511 / DSM 21280 / CIP 103535 / JIP02/86).